The sequence spans 508 residues: 2-isopropylmalate synthase (508 aa).

Positions 5 to 267 (IKIFDTTLRD…THRIDTTQIY (263 aa)) constitute a Pyruvate carboxyltransferase domain. Mn(2+)-binding residues include Asp-14, His-202, His-204, and Asn-238. Residues 390 to 508 (VIDSFQINSG…SEIGESIISQ (119 aa)) form a regulatory domain region.

It belongs to the alpha-IPM synthase/homocitrate synthase family. LeuA type 1 subfamily. Homodimer. The cofactor is Mn(2+).

The protein resides in the cytoplasm. It catalyses the reaction 3-methyl-2-oxobutanoate + acetyl-CoA + H2O = (2S)-2-isopropylmalate + CoA + H(+). It functions in the pathway amino-acid biosynthesis; L-leucine biosynthesis; L-leucine from 3-methyl-2-oxobutanoate: step 1/4. Catalyzes the condensation of the acetyl group of acetyl-CoA with 3-methyl-2-oxobutanoate (2-ketoisovalerate) to form 3-carboxy-3-hydroxy-4-methylpentanoate (2-isopropylmalate). This is 2-isopropylmalate synthase from Ruminiclostridium cellulolyticum (strain ATCC 35319 / DSM 5812 / JCM 6584 / H10) (Clostridium cellulolyticum).